Consider the following 72-residue polypeptide: Phosphonoacetate hydrolase (72 aa).

Monomer. It depends on Unlike bacterial phosphonoacetate hydrolase, does not require zinc as a cofactor. as a cofactor.

It catalyses the reaction phosphonoacetate + H2O = acetate + phosphate + H(+). With respect to regulation, unaffected by EDTA or Ca(2+), Co(2+), Cu(2+), Mg(2+), Mn(2+), Ni(2+) and Zn(2+). The sequence is that of Phosphonoacetate hydrolase from Penicillium oxalicum.